A 1101-amino-acid polypeptide reads, in one-letter code: Carbamoyl phosphate synthase large chain (1101 aa).

Positions 1 to 402 (MPKRTDLKSV…ALQKALRSLE (402 aa)) are carboxyphosphate synthetic domain. ATP contacts are provided by Arg-129, Arg-169, Gly-175, Gly-176, Glu-208, Ile-210, Glu-215, Gly-241, Val-242, His-243, Gln-285, and Glu-299. Positions 133 to 328 (KGVVERAGGE…IAKIATKLAL (196 aa)) constitute an ATP-grasp 1 domain. Mg(2+)-binding residues include Gln-285, Glu-299, and Asn-301. Positions 285, 299, and 301 each coordinate Mn(2+). An oligomerization domain region spans residues 403 to 544 (QKGSELAFPQ…YRYSSYDLET (142 aa)). The interval 545-947 (EVAPHEGESV…AFAKSQSAAG (403 aa)) is carbamoyl phosphate synthetic domain. Residues 675–866 (ALVLERAGLV…LAKAAARIGV (192 aa)) form the ATP-grasp 2 domain. 10 residues coordinate ATP: Arg-711, Arg-750, Leu-752, Glu-757, Gly-782, Ile-783, His-784, Ser-785, Gln-825, and Glu-837. Mg(2+) is bound by residues Gln-825, Glu-837, and Asn-839. 3 residues coordinate Mn(2+): Gln-825, Glu-837, and Asn-839. The MGS-like domain maps to 948-1093 (GPLPTSGRVF…QEHDARLQQA (146 aa)). An allosteric domain region spans residues 948–1101 (GPLPTSGRVF…QAVAGPEAAA (154 aa)).

It belongs to the CarB family. As to quaternary structure, composed of two chains; the small (or glutamine) chain promotes the hydrolysis of glutamine to ammonia, which is used by the large (or ammonia) chain to synthesize carbamoyl phosphate. Tetramer of heterodimers (alpha,beta)4. The cofactor is Mg(2+). Requires Mn(2+) as cofactor.

The enzyme catalyses hydrogencarbonate + L-glutamine + 2 ATP + H2O = carbamoyl phosphate + L-glutamate + 2 ADP + phosphate + 2 H(+). It catalyses the reaction hydrogencarbonate + NH4(+) + 2 ATP = carbamoyl phosphate + 2 ADP + phosphate + 2 H(+). It functions in the pathway amino-acid biosynthesis; L-arginine biosynthesis; carbamoyl phosphate from bicarbonate: step 1/1. It participates in pyrimidine metabolism; UMP biosynthesis via de novo pathway; (S)-dihydroorotate from bicarbonate: step 1/3. Functionally, large subunit of the glutamine-dependent carbamoyl phosphate synthetase (CPSase). CPSase catalyzes the formation of carbamoyl phosphate from the ammonia moiety of glutamine, carbonate, and phosphate donated by ATP, constituting the first step of 2 biosynthetic pathways, one leading to arginine and/or urea and the other to pyrimidine nucleotides. The large subunit (synthetase) binds the substrates ammonia (free or transferred from glutamine from the small subunit), hydrogencarbonate and ATP and carries out an ATP-coupled ligase reaction, activating hydrogencarbonate by forming carboxy phosphate which reacts with ammonia to form carbamoyl phosphate. This chain is Carbamoyl phosphate synthase large chain, found in Micrococcus luteus (strain ATCC 4698 / DSM 20030 / JCM 1464 / CCM 169 / CCUG 5858 / IAM 1056 / NBRC 3333 / NCIMB 9278 / NCTC 2665 / VKM Ac-2230) (Micrococcus lysodeikticus).